The chain runs to 427 residues: Gamma-glutamyl phosphate reductase (427 aa).

Belongs to the gamma-glutamyl phosphate reductase family.

It localises to the cytoplasm. It catalyses the reaction L-glutamate 5-semialdehyde + phosphate + NADP(+) = L-glutamyl 5-phosphate + NADPH + H(+). It participates in amino-acid biosynthesis; L-proline biosynthesis; L-glutamate 5-semialdehyde from L-glutamate: step 2/2. Catalyzes the NADPH-dependent reduction of L-glutamate 5-phosphate into L-glutamate 5-semialdehyde and phosphate. The product spontaneously undergoes cyclization to form 1-pyrroline-5-carboxylate. The protein is Gamma-glutamyl phosphate reductase of Brucella canis (strain ATCC 23365 / NCTC 10854 / RM-666).